Reading from the N-terminus, the 952-residue chain is Ubiquitin carboxyl-terminal hydrolase 15 (952 aa).

A2 is modified (N-acetylalanine). The interval 2-223 is mediates interaction with SART3; the sequence is AEGGAADLDT…KNEDGTWPRG (222 aa). The DUSP domain occupies 7–118; that stretch reads ADLDTQRSDI…GQEPIARKVV (112 aa). In terms of domain architecture, USP spans 260-904; sequence CGLSNLGNTC…AAYVLFYQRQ (645 aa). The active-site Nucleophile is the C269. T573 carries the phosphothreonine modification. Residues 597–665 form a disordered region; that stretch reads ETDGPLRCCE…GGDNDSENGL (69 aa). Positions 627–644 are enriched in acidic residues; sequence METDEPDDESSQDQELPS. The Proton acceptor role is filled by H862. A disordered region spans residues 923 to 952; sequence SAATGVPLESDEDSNDNDNDLENENCMHTN. Residues 931 to 945 show a composition bias toward acidic residues; the sequence is ESDEDSNDNDNDLEN. Residues S932 and S936 each carry the phosphoserine modification.

This sequence belongs to the peptidase C19 family. As to quaternary structure, a homodimer structure has been reported; however it is unclear whether the protein form a homodimer in vivo. Identified in a complex with the COP9 signalosome complex (CSN). Interacts with SMAD1, SMAD2 and SMAD3; the interaction is direct. Forms a complex with SMURF2 and SMAD7. Interacts with TGFBR1. Interacts with SART3; the interaction is direct. May interact with RNF20 and RNF40. May interact with PRKN. Interacts with INCA1. Post-translationally, phosphorylated. Phosphorylation protects against ubiquitination and subsequent degradation by the proteasome. Ubiquitinated, leading to degradation by the proteasome. Highly expressed in testis and spleen, and at lower level in other tissues.

Its subcellular location is the cytoplasm. It is found in the nucleus. The protein resides in the mitochondrion. The catalysed reaction is Thiol-dependent hydrolysis of ester, thioester, amide, peptide and isopeptide bonds formed by the C-terminal Gly of ubiquitin (a 76-residue protein attached to proteins as an intracellular targeting signal).. Functionally, hydrolase that removes conjugated ubiquitin from target proteins and regulates various pathways such as the TGF-beta receptor signaling, NF-kappa-B and RNF41/NRDP1-PRKN pathways. Acts as a key regulator of TGF-beta receptor signaling pathway, but the precise mechanism is still unclear: according to a report, acts by promoting deubiquitination of monoubiquitinated R-SMADs (SMAD1, SMAD2 and/or SMAD3), thereby alleviating inhibition of R-SMADs and promoting activation of TGF-beta target genes. According to another reports, regulates the TGF-beta receptor signaling pathway by mediating deubiquitination and stabilization of TGFBR1, leading to an enhanced TGF-beta signal. Able to mediate deubiquitination of monoubiquitinated substrates, 'Lys-27'-, 'Lys-48'- and 'Lys-63'-linked polyubiquitin chains. May also regulate gene expression and/or DNA repair through the deubiquitination of histone H2B. Acts as an inhibitor of mitophagy by counteracting the action of parkin (PRKN): hydrolyzes cleavage of 'Lys-48'- and 'Lys-63'-linked polyubiquitin chains attached by parkin on target proteins such as MFN2, thereby reducing parkin's ability to drive mitophagy. Acts as an associated component of COP9 signalosome complex (CSN) and regulates different pathways via this association: regulates NF-kappa-B by mediating deubiquitination of NFKBIA and deubiquitinates substrates bound to VCP. Involved in endosome organization by mediating deubiquitination of SQSTM1: ubiquitinated SQSTM1 forms a molecular bridge that restrains cognate vesicles in the perinuclear region and its deubiquitination releases target vesicles for fast transport into the cell periphery. Acts as a negative regulator of antifungal immunity by mediating 'Lys-27'-linked deubiquitination of CARD9, thereby inactivating CARD9. The sequence is that of Ubiquitin carboxyl-terminal hydrolase 15 (Usp15) from Rattus norvegicus (Rat).